The chain runs to 660 residues: Phosphatidylinositol-3-phosphate phosphatase MTMR7 (660 aa).

The Myotubularin phosphatase domain occupies 126–504; the sequence is GWLLVDLSEE…FTYKFWNGMY (379 aa). Residues N250, N275, and I276 each contribute to the a 1,2-diacyl-sn-glycero-3-phospho-(1D-myo-inositol-3-phosphate) site. C338 acts as the Phosphocysteine intermediate in catalysis. Residues S339, D340, G341, W342, D343, R344, and R384 each contribute to the a 1,2-diacyl-sn-glycero-3-phospho-(1D-myo-inositol-3-phosphate) site. Residues 514-548 adopt a coiled-coil conformation; that stretch reads RQSVTDYLMAVKEESQQLEEELESLEERLEKIQKV. A disordered region spans residues 550–660; sequence LHGTKVKSKQ…DSDEAVFLTA (111 aa). Polar residues predominate over residues 566-596; sequence SGFSTSDHSTANTPQDYSGNSKSFPSRSPSQ. Position 578 is a phosphothreonine (T578). The segment covering 641–653 has biased composition (basic and acidic residues); that stretch reads APSEDSGKDRDSD.

Belongs to the protein-tyrosine phosphatase family. Non-receptor class myotubularin subfamily. In terms of assembly, heterodimer (via C-terminus) with MTMR9 (via coiled coil domain); the interaction enhances MTMR7 catalytic activity. Does not homodimerize. Interacts with RAB1B (in GDP-bound form). In terms of tissue distribution, highly expressed in brain (at protein level). Expressed at low levels in liver, kidney and testis.

The protein localises to the cytoplasm. The protein resides in the endomembrane system. It catalyses the reaction a 1,2-diacyl-sn-glycero-3-phospho-(1D-myo-inositol-3-phosphate) + H2O = a 1,2-diacyl-sn-glycero-3-phospho-(1D-myo-inositol) + phosphate. The catalysed reaction is 1D-myo-inositol 1,3-bisphosphate + H2O = 1D-myo-inositol 1-phosphate + phosphate. With respect to regulation, interaction with MTMR9 increases phosphatase activity. Functionally, lipid phosphatase that specifically dephosphorylates the D-3 position of phosphatidylinositol 3-phosphate (PtdIns(3)P) and inositol 1,3-bisphosphate (Ins(1,3)P2). The polypeptide is Phosphatidylinositol-3-phosphate phosphatase MTMR7 (Mus musculus (Mouse)).